We begin with the raw amino-acid sequence, 292 residues long: Ribosomal protein L11 methyltransferase (292 aa).

Residues T136, G159, D181, and N228 each contribute to the S-adenosyl-L-methionine site.

This sequence belongs to the methyltransferase superfamily. PrmA family.

The protein resides in the cytoplasm. It catalyses the reaction L-lysyl-[protein] + 3 S-adenosyl-L-methionine = N(6),N(6),N(6)-trimethyl-L-lysyl-[protein] + 3 S-adenosyl-L-homocysteine + 3 H(+). Functionally, methylates ribosomal protein L11. The chain is Ribosomal protein L11 methyltransferase from Agrobacterium fabrum (strain C58 / ATCC 33970) (Agrobacterium tumefaciens (strain C58)).